The sequence spans 382 residues: Homeobox protein bagpipe (382 aa).

Disordered stretches follow at residues 27 to 66, 144 to 178, and 314 to 382; these read NDILTRSNPETRRMSSVDSEPEPEKLKPSSDRERSISKSP, TSNDSDCDSPPPLSSSPSESPLSHDGSGLSRKKRS, and QPIP…VEID. Basic and acidic residues predominate over residues 48–62; that stretch reads EPEKLKPSSDRERSI. A compositionally biased stretch (low complexity) spans 158-170; sequence SSPSESPLSHDGS. A DNA-binding region (homeobox) is located at residues 175–234; sequence KKRSRAAFSHAQVFELERRFAQQRYLSGPERSEMAKSLRLTETQVKIWFQNRRYKTKRKQ. The segment covering 321-335 has biased composition (low complexity); the sequence is QSSSFVTASSASSSP. Acidic residues predominate over residues 373 to 382; the sequence is EDVDENVEID.

It belongs to the NK-3 homeobox family. As to expression, is expressed in a segmented pattern in visceral muscle and in a subset of cardiac muscles. Loss of activity results in segmental gaps in midgut visceral muscle.

It is found in the nucleus. In terms of biological role, involved in the determination of cell fates in the dorsal mesoderm. This chain is Homeobox protein bagpipe (bap), found in Drosophila melanogaster (Fruit fly).